A 406-amino-acid polypeptide reads, in one-letter code: Kelch domain-containing protein 1 (406 aa).

6 Kelch repeats span residues 24–76 (FLYV…CGAC), 80–134 (RLYV…VYKD), 135–181 (RLIY…TKTR), 208–258 (KGYV…AITD), 260–307 (KLFL…ACLG), and 311–361 (EIMV…LKSQ).

In terms of assembly, component of a CRL5 E3 ubiquitin-protein ligase complex, also named ECS (Elongin BC-CUL2/5-SOCS-box protein) complex, composed of CUL5, Elongin BC (ELOB and ELOC), RBX1 and substrate-specific adapter KLHDC1.

The protein resides in the cytoplasm. The protein localises to the cytosol. It functions in the pathway protein modification; protein ubiquitination. Substrate-recognition component of a Cul5-RING (CRL5) E3 ubiquitin-protein ligase complex of the DesCEND (destruction via C-end degrons) pathway, which recognizes a C-degron located at the extreme C terminus of target proteins, leading to their ubiquitination and degradation. The C-degron recognized by the DesCEND pathway is usually a motif of less than ten residues and can be present in full-length proteins, truncated proteins or proteolytically cleaved forms. The CRL5(KLHDC1) complex mediates ubiquitination and degradation of truncated SELENOS selenoprotein produced by failed UGA/Sec decoding, which ends with a glycine. The chain is Kelch domain-containing protein 1 from Mus musculus (Mouse).